Reading from the N-terminus, the 160-residue chain is Cytochrome b6-f complex subunit 4 (160 aa).

3 consecutive transmembrane segments (helical) span residues 36–56 (LLYIFPVVIFGTFACCIGLAV), 95–115 (LLGVLAMAAVPVGLLTVPFIE), and 131–151 (ILFLVGTLVAVWLGIGATFPI).

This sequence belongs to the cytochrome b family. PetD subfamily. The 4 large subunits of the cytochrome b6-f complex are cytochrome b6, subunit IV (17 kDa polypeptide, petD), cytochrome f and the Rieske protein, while the 4 small subunits are petG, petL, petM and petN. The complex functions as a dimer.

The protein resides in the plastid. It localises to the chloroplast thylakoid membrane. In terms of biological role, component of the cytochrome b6-f complex, which mediates electron transfer between photosystem II (PSII) and photosystem I (PSI), cyclic electron flow around PSI, and state transitions. This Chlamydomonas moewusii (Chlamydomonas eugametos) protein is Cytochrome b6-f complex subunit 4.